Reading from the N-terminus, the 1165-residue chain is Disease resistance protein RPS4B (1165 aa).

Residues 12 to 174 enclose the TIR domain; it reads PQHQVFINFR…EIVKEVKKVL (163 aa). Glu86 is an active-site residue. The NB-ARC domain occupies 211 to 474; that stretch reads KQRLKELEEK…FLDIACFRSQ (264 aa). An LRR 1 repeat occupies 592–613; sequence SHCPHECLTNNKINMPDGLELP. The stretch at 614–635 is one LRR 2; degenerate repeat; it reads LKEVRCLHWLKFPLEELPNDFD. LRR repeat units lie at residues 636–659, 684–703, 704–725, 726–748, 772–794, and 795–818; these read PINL…VKDT, NLQR…RDVN, LTSL…PLIP, ENLK…VGNL, LKTL…EINK, and SSLK…SVQY. Residues 819-836 form an LRR 9; degenerate repeat; the sequence is LCLSRNDHLIYLPAGINQ. One copy of the LRR 10 repeat lies at 837-863; sequence VSQLTRLDLKYCTKLTYVPELPPTLQY.

The protein belongs to the disease resistance TIR-NB-LRR family. Interacts with RRS1B. RPS4B-RRS1B heterodimer interacts with the bacterial effectors AvrRps4 and PopP2.

The protein localises to the nucleus. It catalyses the reaction NAD(+) + H2O = ADP-D-ribose + nicotinamide + H(+). In terms of biological role, disease resistance (R) protein that specifically recognizes the AvrRps4 type III effector avirulence protein from P.syringae. Heterodimerization with RRS1B is required to form a functional complex to recognize AvrRps4 and to mediate the hypersensitive response. This is Disease resistance protein RPS4B from Arabidopsis thaliana (Mouse-ear cress).